Here is a 98-residue protein sequence, read N- to C-terminus: NADH-ubiquinone oxidoreductase chain 4L (98 aa).

Helical transmembrane passes span 1-21, 29-49, and 61-81; these read MSMVYFNIFLAFIVSLVGLLM, SLLCLEGMMLSLFVMMSVTIL, and IILLVFAACEAALGLSLLVMV.

It belongs to the complex I subunit 4L family. In terms of assembly, core subunit of respiratory chain NADH dehydrogenase (Complex I) which is composed of 45 different subunits.

The protein localises to the mitochondrion inner membrane. It carries out the reaction a ubiquinone + NADH + 5 H(+)(in) = a ubiquinol + NAD(+) + 4 H(+)(out). Functionally, core subunit of the mitochondrial membrane respiratory chain NADH dehydrogenase (Complex I) which catalyzes electron transfer from NADH through the respiratory chain, using ubiquinone as an electron acceptor. Part of the enzyme membrane arm which is embedded in the lipid bilayer and involved in proton translocation. The polypeptide is NADH-ubiquinone oxidoreductase chain 4L (MT-ND4L) (Callorhinus ursinus (Northern fur seal)).